Reading from the N-terminus, the 122-residue chain is Hexon-interlacing protein (122 aa).

Positions 72–106 (VTELNESIDELQQKMTELEKRLKIMEEKIEEIKLA) form a coiled coil.

The protein belongs to the adenoviridae hexon-interlacing protein family. As to quaternary structure, homotrimer. Interacts with hexon protein; this interaction tethers the hexons together. Self-interacts with adjacent proteins. Interacts with kinesin light chain KLC1; this interaction leads to capsid disruption at the nuclear pore complex during virus entry into host cell.

The protein resides in the virion. It is found in the host nucleus. Its function is as follows. Structural component of the virion that acts as a cement protein on the capsid exterior and forms triskelion structures consisting of three molecules that stabilize three hexon trimers at the center of each icosahedral facet and fixes the peripentonal hexons. Dispensable for assembly. During virus entry, recruits the anterograde motor kinesin-1 to the capsid docked at the nuclear pore complex thereby subjecting the docked capsid to a pulling force. The resulting tension leads to capsid disruption, dispersion of capsid fragments toward cell periphery and eventually viral DNA entry into the host nucleus. This is Hexon-interlacing protein from Tupaiidae (tree shrews).